A 204-amino-acid polypeptide reads, in one-letter code: 8-oxoguanine DNA glycosylase/AP lyase (204 aa).

Residues lysine 128 and aspartate 146 contribute to the active site.

This sequence belongs to the type-2 OGG1 family.

The catalysed reaction is 2'-deoxyribonucleotide-(2'-deoxyribose 5'-phosphate)-2'-deoxyribonucleotide-DNA = a 3'-end 2'-deoxyribonucleotide-(2,3-dehydro-2,3-deoxyribose 5'-phosphate)-DNA + a 5'-end 5'-phospho-2'-deoxyribonucleoside-DNA + H(+). Its function is as follows. Catalyzes the excision of an oxidatively damaged form of guanine (7,8-dihydro-8-oxoguanine = 8-oxoG) from DNA. Also cleaves the DNA backbone at apurinic/apyrimidinic sites (AP sites). The chain is 8-oxoguanine DNA glycosylase/AP lyase from Sulfurisphaera tokodaii (strain DSM 16993 / JCM 10545 / NBRC 100140 / 7) (Sulfolobus tokodaii).